The following is a 491-amino-acid chain: Ubiquitin carboxyl-terminal hydrolase 30 (491 aa).

Topologically, residues M1–W31 are mitochondrial intermembrane. The chain crosses the membrane as a helical span at residues G32–I52. Residues S53–E491 are Cytoplasmic-facing. The USP domain occupies P64–M482. C73 acts as the Nucleophile in catalysis. Polar residues predominate over residues A346 to T355. The segment at A346 to K365 is disordered. H432 functions as the Proton acceptor in the catalytic mechanism.

It belongs to the peptidase C19 family.

It localises to the mitochondrion outer membrane. It carries out the reaction Thiol-dependent hydrolysis of ester, thioester, amide, peptide and isopeptide bonds formed by the C-terminal Gly of ubiquitin (a 76-residue protein attached to proteins as an intracellular targeting signal).. In terms of biological role, deubiquitinating enzyme that acts as a key inhibitor of mitophagy by counteracting the action of parkin (PRKN). This is Ubiquitin carboxyl-terminal hydrolase 30 (usp30) from Danio rerio (Zebrafish).